We begin with the raw amino-acid sequence, 557 residues long: Suprabasin (557 aa).

The signal sequence occupies residues 1–23; sequence MHLASLLSSCSLLLLLGALPGWA. 4 disordered regions span residues 150 to 175, 422 to 441, 464 to 490, and 509 to 533; these read RFGQ…GAHH, GQGA…KVAQ, AAGQ…GKQE, and NQLL…TTLT. Positions 153 to 175 are enriched in low complexity; the sequence is QGAHHATGQAGKEAEKFGQGAHH. Over residues 476 to 487 the composition is skewed to low complexity; that stretch reads GQGVHHAAGQAG.

The protein resides in the secreted. The sequence is that of Suprabasin (SBSN) from Bos taurus (Bovine).